A 346-amino-acid polypeptide reads, in one-letter code: MEMELIQGNEAAVRGAINAGCNFFAGYPITPSSEIAHGMAELLPKFGGVFIQMEDEIASISAVIGASMAGAVAMTATSGPGFSLMQEGMGYAAITESPVVIFNVMRAGPSTGIPTAPSQGDAMQARYGSHGDYPIVVLAPASVKDMYYLTVEAFKIAFRFSTPVIVLSDEIVGHMRESVALPPLGEIESYEKRAKNLIDGRRRHRTGLVHTENGLPTTDLEEYEKLLRLLFAKFDDFRPMVRFEGEEGVLFVAYGSSYRLAKSSAKLLAEKGVSAGILKLESLFPFPEDAVRRYSKKADLVVVPEMNAGQVVKEVERVCCCRVKGVSYFGSLILPEKLVEIVEGEL.

As to quaternary structure, heterotetramer of the KorA, KorB, KorC and KorD subunits.

The enzyme catalyses 2 oxidized [2Fe-2S]-[ferredoxin] + 2-oxoglutarate + CoA = succinyl-CoA + 2 reduced [2Fe-2S]-[ferredoxin] + CO2 + H(+). The sequence is that of 2-oxoglutarate synthase subunit KorA (korA) from Archaeoglobus fulgidus (strain ATCC 49558 / DSM 4304 / JCM 9628 / NBRC 100126 / VC-16).